The following is a 344-amino-acid chain: UDP-3-O-acylglucosamine N-acyltransferase (344 aa).

The active-site Proton acceptor is the histidine 248.

Belongs to the transferase hexapeptide repeat family. LpxD subfamily. In terms of assembly, homotrimer.

The catalysed reaction is a UDP-3-O-[(3R)-3-hydroxyacyl]-alpha-D-glucosamine + a (3R)-hydroxyacyl-[ACP] = a UDP-2-N,3-O-bis[(3R)-3-hydroxyacyl]-alpha-D-glucosamine + holo-[ACP] + H(+). It participates in bacterial outer membrane biogenesis; LPS lipid A biosynthesis. Its function is as follows. Catalyzes the N-acylation of UDP-3-O-acylglucosamine using 3-hydroxyacyl-ACP as the acyl donor. Is involved in the biosynthesis of lipid A, a phosphorylated glycolipid that anchors the lipopolysaccharide to the outer membrane of the cell. This is UDP-3-O-acylglucosamine N-acyltransferase from Prochlorococcus marinus subsp. pastoris (strain CCMP1986 / NIES-2087 / MED4).